Here is a 163-residue protein sequence, read N- to C-terminus: Ribosome maturation factor RimP (163 aa).

This sequence belongs to the RimP family.

The protein localises to the cytoplasm. In terms of biological role, required for maturation of 30S ribosomal subunits. This chain is Ribosome maturation factor RimP, found in Streptococcus mutans serotype c (strain ATCC 700610 / UA159).